The following is a 2208-amino-acid chain: RNA-directed RNA polymerase L (2208 aa).

Residues 26 to 284 (KEALLSQVEV…SHAGTTVPEC (259 aa)) form an endonuclease region. Mn(2+)-binding residues include E51, D89, and E102. K115 is a catalytic residue. Residues 1172-1370 (CDMKMAVNNG…FLSSKLNKFV (199 aa)) form the RdRp catalytic domain. D1330 serves as a coordination point for Mg(2+).

The protein belongs to the Bunyavirales RNA polymerase family. Homomultimer; the oligomeric structure is essential for the polymerase activity. Interacts with nucleoprotein N. Interacts with protein Z; this interaction inhibits viral transcription and replication, Z partially blocks the product exit tunnel for the releasing nascent RNA product. Requires Mn(2+) as cofactor. The cofactor is Mg(2+).

It localises to the virion. It is found in the host cytoplasm. It catalyses the reaction RNA(n) + a ribonucleoside 5'-triphosphate = RNA(n+1) + diphosphate. In terms of biological role, RNA-dependent RNA polymerase, which is responsible for the replication and transcription of the viral RNA genome using antigenomic RNA as an intermediate. During transcription, synthesizes subgenomic RNAs and assures their capping by a cap-snatching mechanism, which involves the endonuclease activity cleaving the host capped pre-mRNAs. These short capped RNAs are then used as primers for viral transcription. The 3'-end of subgenomic mRNAs molecules are heterogeneous and not polyadenylated. The replicase function is to direct synthesis of antigenomic and genomic RNA which are encapsidated and non capped. As a consequence of the use of the same enzyme for both transcription and replication, these mechanisms need to be well coordinated. These processes may be regulated by proteins N and Z in a dose-dependent manner. Z protein inhibits the viral polymerase L und thus the viral transcription and RNA synthesis. This Hylaeamys megacephalus (Large-headed rice rat) protein is RNA-directed RNA polymerase L.